The sequence spans 403 residues: Acetate kinase (403 aa).

Asparagine 7 lines the Mg(2+) pocket. Lysine 14 contributes to the ATP binding site. Residue arginine 90 coordinates substrate. Aspartate 147 acts as the Proton donor/acceptor in catalysis. ATP-binding positions include histidine 207–glycine 211, aspartate 283–arginine 285, and glycine 331–asparagine 335. Glutamate 386 provides a ligand contact to Mg(2+).

Belongs to the acetokinase family. In terms of assembly, homodimer. Mg(2+) is required as a cofactor. The cofactor is Mn(2+).

Its subcellular location is the cytoplasm. The enzyme catalyses acetate + ATP = acetyl phosphate + ADP. It functions in the pathway metabolic intermediate biosynthesis; acetyl-CoA biosynthesis; acetyl-CoA from acetate: step 1/2. Its function is as follows. Catalyzes the formation of acetyl phosphate from acetate and ATP. Can also catalyze the reverse reaction. This chain is Acetate kinase, found in Thermotoga sp. (strain RQ2).